The primary structure comprises 501 residues: Cytochrome P450 90A4 (501 aa).

Residues 2-22 traverse the membrane as a helical segment; that stretch reads AAAALLLLAAAAAAVVVAMAL. Cys446 contacts heme.

It belongs to the cytochrome P450 family. Heme is required as a cofactor.

Its subcellular location is the membrane. It functions in the pathway plant hormone biosynthesis; brassinosteroid biosynthesis. Its function is as follows. Catalyzes the C23-alpha-hydroxylation step in brassinosteroid biosynthesis. Converts 6-deoxocathasterone to 6-deoxoteasterone in the late C6-oxidation pathway and cathasterone to teasterone (TE) in the early C6-oxidation pathway of brassinolide (BL) biosynthesis. The protein is Cytochrome P450 90A4 of Oryza sativa subsp. indica (Rice).